We begin with the raw amino-acid sequence, 526 residues long: Transcription factor MYC1 (526 aa).

The segment at 330-351 is disordered; it reads MFPSQNSGLNQDDPSDRRKENE. The span at 332–341 shows a compositional bias: polar residues; the sequence is PSQNSGLNQD. In terms of domain architecture, bHLH spans 333 to 382; the sequence is SQNSGLNQDDPSDRRKENEKFSVLRTMVPTVNEVDKESILNNTIKYLQEL.

In terms of assembly, homodimer. Interacts with MYB75/PAP1, MYB90/PAP2, MYB4, MYB5, MYB6, MYB23, MYB82, MYB113, MYB114, TT2, MYB0/GL1, and MYB66/WER. In terms of tissue distribution, mostly expressed in developing seeds. Also detected in stems and leaves.

The protein resides in the nucleus. Functionally, trancsription activator, when associated with MYB75/PAP1 or MYB90/PAP2. In Arabidopsis thaliana (Mouse-ear cress), this protein is Transcription factor MYC1 (BHLH12).